Here is a 576-residue protein sequence, read N- to C-terminus: Sulfite reductase [NADPH] hemoprotein beta-component (576 aa).

[4Fe-4S] cluster-binding residues include Cys435, Cys441, Cys480, and Cys484. Cys484 contributes to the siroheme binding site.

Belongs to the nitrite and sulfite reductase 4Fe-4S domain family. In terms of assembly, alpha(8)-beta(8). The alpha component is a flavoprotein, the beta component is a hemoprotein. It depends on siroheme as a cofactor. Requires [4Fe-4S] cluster as cofactor.

The enzyme catalyses hydrogen sulfide + 3 NADP(+) + 3 H2O = sulfite + 3 NADPH + 4 H(+). The protein operates within sulfur metabolism; hydrogen sulfide biosynthesis; hydrogen sulfide from sulfite (NADPH route): step 1/1. Component of the sulfite reductase complex that catalyzes the 6-electron reduction of sulfite to sulfide. This is one of several activities required for the biosynthesis of L-cysteine from sulfate. The polypeptide is Sulfite reductase [NADPH] hemoprotein beta-component (Yersinia pseudotuberculosis serotype IB (strain PB1/+)).